A 940-amino-acid chain; its full sequence is Isoleucine--tRNA ligase (940 aa).

The 'HIGH' region signature appears at 58-68 (PYANGSIHIGH). Glutamate 564 lines the L-isoleucyl-5'-AMP pocket. A 'KMSKS' region motif is present at residues 605–609 (KMSKS). Lysine 608 lines the ATP pocket. Cysteine 903, cysteine 906, cysteine 923, and cysteine 926 together coordinate Zn(2+).

Belongs to the class-I aminoacyl-tRNA synthetase family. IleS type 1 subfamily. In terms of assembly, monomer. It depends on Zn(2+) as a cofactor.

It is found in the cytoplasm. The catalysed reaction is tRNA(Ile) + L-isoleucine + ATP = L-isoleucyl-tRNA(Ile) + AMP + diphosphate. Catalyzes the attachment of isoleucine to tRNA(Ile). As IleRS can inadvertently accommodate and process structurally similar amino acids such as valine, to avoid such errors it has two additional distinct tRNA(Ile)-dependent editing activities. One activity is designated as 'pretransfer' editing and involves the hydrolysis of activated Val-AMP. The other activity is designated 'posttransfer' editing and involves deacylation of mischarged Val-tRNA(Ile). The protein is Isoleucine--tRNA ligase of Shewanella putrefaciens (strain CN-32 / ATCC BAA-453).